The chain runs to 331 residues: Small ribosomal subunit protein uS2 (331 aa).

It belongs to the universal ribosomal protein uS2 family.

The sequence is that of Small ribosomal subunit protein uS2 from Rhodopseudomonas palustris (strain HaA2).